We begin with the raw amino-acid sequence, 136 residues long: Large ribosomal subunit protein uL16 (136 aa).

This sequence belongs to the universal ribosomal protein uL16 family. Part of the 50S ribosomal subunit.

Its function is as follows. Binds 23S rRNA and is also seen to make contacts with the A and possibly P site tRNAs. The polypeptide is Large ribosomal subunit protein uL16 (Vesicomyosocius okutanii subsp. Calyptogena okutanii (strain HA)).